Consider the following 176-residue polypeptide: Inner membrane-spanning protein YciB (176 aa).

Transmembrane regions (helical) follow at residues 24–44, 49–69, 76–96, 121–141, and 149–169; these read TATAVAIGATLVQIAWVAFRH, PMLWVSLGVVTVFGGATLVLH, WKPTVLYWAFSVVLVVSALGF, YVWAVFFVLLGILNLFVAYNF, and FKLFGATGCLVVFIVGQSLWL.

The protein belongs to the YciB family.

It is found in the cell inner membrane. In terms of biological role, plays a role in cell envelope biogenesis, maintenance of cell envelope integrity and membrane homeostasis. This is Inner membrane-spanning protein YciB from Paraburkholderia phymatum (strain DSM 17167 / CIP 108236 / LMG 21445 / STM815) (Burkholderia phymatum).